The primary structure comprises 350 residues: Phosphotriesterase-related protein (350 aa).

Residues His-22, His-24, Glu-169, His-201, His-230, and Asp-298 each contribute to the a divalent metal cation site.

Belongs to the metallo-dependent hydrolases superfamily. Phosphotriesterase family. A divalent metal cation is required as a cofactor.

The chain is Phosphotriesterase-related protein from Drosophila erecta (Fruit fly).